We begin with the raw amino-acid sequence, 396 residues long: Probable sugar efflux transporter (396 aa).

12 helical membrane-spanning segments follow: residues Val-15 to Met-35, Gly-51 to Ala-71, Leu-84 to Leu-104, Met-109 to Ile-129, Gln-137 to Gly-157, Val-168 to Leu-188, Pro-209 to Tyr-229, Asn-245 to Phe-265, Pro-273 to Phe-293, Thr-297 to Leu-317, Val-333 to Gly-353, and Ile-365 to Leu-385.

The protein belongs to the major facilitator superfamily. SotB (TC 2.A.1.2) family.

The protein resides in the cell inner membrane. In terms of biological role, involved in the efflux of sugars. The physiological role may be the reduction of the intracellular concentration of toxic sugars or sugar metabolites. The polypeptide is Probable sugar efflux transporter (Haemophilus influenzae (strain ATCC 51907 / DSM 11121 / KW20 / Rd)).